The primary structure comprises 340 residues: Lipopolysaccharide heptosyltransferase 3 (340 aa).

The protein belongs to the glycosyltransferase 9 family.

It carries out the reaction an L-alpha-D-Hep-(1-&gt;3)-4-O-phospho-L-alpha-D-Hep-(1-&gt;5)-[alpha-Kdo-(2-&gt;4)]-alpha-Kdo-(2-&gt;6)-lipid A + ADP-L-glycero-beta-D-manno-heptose = an L-alpha-D-Hep-(1-&gt;7)-L-alpha-D-Hep-(1-&gt;3)-4-O-phospho-L-alpha-D-Hep-(1-&gt;5)-[alpha-Kdo-(2-&gt;4)]-alpha-Kdo-(2-&gt;6)-lipid A + ADP + H(+). The catalysed reaction is L-alpha-D-Hep-(1-&gt;3)-4-O-phospho-L-alpha-D-Hep-(1-&gt;5)-[alpha-Kdo-(2-&gt;4)]-alpha-Kdo-(2-&gt;6)-lipid A (E. coli) + ADP-L-glycero-beta-D-manno-heptose = L-alpha-D-Hep-(1-&gt;7)-L-alpha-D-Hep-(1-&gt;3)-4-O-phospho-L-alpha-D-Hep-(1-&gt;5)-[alpha-Kdo-(2-&gt;4)]-alpha-Kdo-(2-&gt;6)-lipid A (E. coli) + ADP + H(+). The protein operates within bacterial outer membrane biogenesis; LPS core biosynthesis. Glycosyltransferase involved in the biosynthesis of the core oligosaccharide region of lipopolysaccharide (LPS). Catalyzes the addition of the third heptose unit (HepIII) to the second heptose unit (HepII) of the phospho-Hep2-Kdo2-lipid A module. The transfer of HepIII seems to be a prerequisite to the phosphorylation of the second heptose unit. In Escherichia coli, this protein is Lipopolysaccharide heptosyltransferase 3.